The sequence spans 267 residues: MKKILLTVSLGLALSACATQGTVDKDAQITQDWSVEKLYAEAQDELNSSNYTRAVKLYEILESRFPTSRHAQQSQLDTAYAYYKDDEKDKALAAIDRFRRLHPQHPNMDYALYLRGLVLFNEDQSFLNKLASQDWSDRDPKANREAYQAFAELVQRFPNSKYAADATARMVKLVDALGGNEMSVARYYMKRGAYIAAANRAQKIIGSYQNTRYVEESLAILELAYKKLDKPRLAADTRRVLETNFPKSPFLKQPWRSDDMPWWRYWH.

The signal sequence occupies residues 1 to 16; sequence MKKILLTVSLGLALSA. A lipid anchor (N-palmitoyl cysteine) is attached at C17. Residue C17 is the site of S-diacylglycerol cysteine attachment.

The protein belongs to the BamD family. As to quaternary structure, part of the Bam complex.

The protein localises to the cell outer membrane. Its function is as follows. Part of the outer membrane protein assembly complex, which is involved in assembly and insertion of beta-barrel proteins into the outer membrane. Required for efficient transformation of Neisseria meningitidis by species-related DNA. The polypeptide is Outer membrane protein assembly factor BamD (Neisseria meningitidis serogroup B (strain ATCC BAA-335 / MC58)).